The following is a 1160-amino-acid chain: Major DNA-binding protein (1160 aa).

Positions 808-809 (FW) match the Required for filament formation motif. Positions 1139–1160 (ARGGEHAFDEDCGLLPAKRGRL) are required for nuclear localization.

This sequence belongs to the herpesviridae major DNA-binding protein family. As to quaternary structure, homooligomers. Forms double-helical filaments necessary for the formation of replication compartments within the host nucleus. Interacts with the origin-binding protein. Interacts with the helicase primase complex; this interaction stimulates primer synthesis activity of the helicase-primase complex. Interacts with the DNA polymerase. Interacts with the alkaline exonuclease; this interaction increases its nuclease processivity.

Its subcellular location is the host nucleus. Single-stranded DNA-binding protein required for DNA replication. Functionally, plays several crucial roles in viral infection. Participates in the opening of the viral DNA origin to initiate replication by interacting with the origin-binding protein. May disrupt loops, hairpins and other secondary structures present on ssDNA to reduce and eliminate pausing of viral DNA polymerase at specific sites during elongation. Promotes viral DNA recombination by performing strand-transfer, characterized by the ability to transfer a DNA strand from a linear duplex to a complementary single-stranded DNA circle. Can also catalyze the renaturation of complementary single strands. Additionally, reorganizes the host cell nucleus, leading to the formation of prereplicative sites and replication compartments. This process is driven by the protein which can form double-helical filaments in the absence of DNA. This chain is Major DNA-binding protein, found in Simian cytomegalovirus (strain Colburn).